A 944-amino-acid polypeptide reads, in one-letter code: Probable UDP-N-acetylglucosamine--peptide N-acetylglucosaminyltransferase SPINDLY (944 aa).

TPR repeat units follow at residues 34–67 (GTDA…DGAN), 68–101 (VEAL…DPKN), 102–135 (ACAL…DPSY), 143–176 (AIVL…DSHY), 177–210 (APAY…RPLY), 211–244 (AEAY…SPNF), 252–285 (AIAL…NWHY), 286–319 (ADAM…NPRC), 320–353 (AEAC…KPNF), 355–387 (QSLN…NPTY), and 388–421 (AEAY…DPDS). The interval 422 to 944 (RNAGQNRLLA…RCEANGHSSR (523 aa)) is catalytic region. Residues 873 to 944 (NATAEEDNQS…RCEANGHSSR (72 aa)) are disordered. Positions 897-911 (PQPQIMVNGVTSPEG) are enriched in polar residues.

This sequence belongs to the glycosyltransferase 41 family. O-GlcNAc transferase subfamily. In terms of tissue distribution, expressed in all parts of plants, including immature leaf blade, leaf sheath, mature leaf blade, roots, germinating embryos and aleurone layers.

It localises to the nucleus. It catalyses the reaction L-seryl-[protein] + UDP-N-acetyl-alpha-D-glucosamine = 3-O-(N-acetyl-beta-D-glucosaminyl)-L-seryl-[protein] + UDP + H(+). The enzyme catalyses L-threonyl-[protein] + UDP-N-acetyl-alpha-D-glucosamine = 3-O-(N-acetyl-beta-D-glucosaminyl)-L-threonyl-[protein] + UDP + H(+). The protein operates within protein modification; protein glycosylation. Probable O-linked N-acetylglucosamine transferase (OGT) involved in various processes such as gibberellin (GA) signaling pathway. OGTs catalyze the addition of nucleotide-activated sugars directly onto the polypeptide through O-glycosidic linkage with the hydroxyl of serine or threonine. Probably acts by adding O-linked sugars to yet unknown proteins. The chain is Probable UDP-N-acetylglucosamine--peptide N-acetylglucosaminyltransferase SPINDLY (SPY) from Hordeum vulgare (Barley).